The sequence spans 620 residues: Chaperone protein HtpG (620 aa).

The tract at residues 1–334 (MTTTDTAPQT…SEDLPLNLSR (334 aa)) is a; substrate-binding. The segment at 335 to 548 (EMLQNNPQLV…GQGPDRALER (214 aa)) is b. Residues 549 to 620 (MLAQQNRGGA…RINRLVLRAL (72 aa)) are c.

The protein belongs to the heat shock protein 90 family. As to quaternary structure, homodimer.

Its subcellular location is the cytoplasm. Molecular chaperone. Has ATPase activity. The chain is Chaperone protein HtpG from Rhodopseudomonas palustris (strain BisA53).